A 95-amino-acid polypeptide reads, in one-letter code: uncharacterized protein (95 aa).

This is an uncharacterized protein from Acheta domesticus (House cricket).